Here is a 413-residue protein sequence, read N- to C-terminus: L-arginine-specific L-amino acid ligase (413 aa).

One can recognise an ATP-grasp domain in the interval 115 to 312 (KTKLKMEGIP…LWESSLNISV (198 aa)). 141-202 (GEKLGWPIIV…EKCIEMEEFH (62 aa)) provides a ligand contact to ATP. 2 residues coordinate Mg(2+): glutamate 268 and glutamate 281. The Mn(2+) site is built by glutamate 268 and glutamate 281.

In terms of assembly, homodimer. Mg(2+) serves as cofactor. Mn(2+) is required as a cofactor. Requires Co(2+) as cofactor.

The catalysed reaction is an L-alpha-amino acid + L-arginine + ATP = L-arginyl-L-alpha-amino acid + ADP + phosphate + H(+). Catalyzes the synthesis of Arg-Xaa dipeptides in an ATP-dependent manner. Has strict specificity toward arginine as the N-terminal substrate. The protein is L-arginine-specific L-amino acid ligase of Bacillus subtilis.